Consider the following 122-residue polypeptide: Large ribosomal subunit protein uL14 (122 aa).

The protein belongs to the universal ribosomal protein uL14 family. Part of the 50S ribosomal subunit. Forms a cluster with proteins L3 and L19. In the 70S ribosome, L14 and L19 interact and together make contacts with the 16S rRNA in bridges B5 and B8.

Functionally, binds to 23S rRNA. Forms part of two intersubunit bridges in the 70S ribosome. In Halorhodospira halophila (strain DSM 244 / SL1) (Ectothiorhodospira halophila (strain DSM 244 / SL1)), this protein is Large ribosomal subunit protein uL14.